Reading from the N-terminus, the 432-residue chain is Trigger factor (432 aa).

In terms of domain architecture, PPIase FKBP-type spans 161–246; sequence EDRVTIDFSG…LKKVEERELP (86 aa).

The protein belongs to the FKBP-type PPIase family. Tig subfamily.

It localises to the cytoplasm. It carries out the reaction [protein]-peptidylproline (omega=180) = [protein]-peptidylproline (omega=0). In terms of biological role, involved in protein export. Acts as a chaperone by maintaining the newly synthesized protein in an open conformation. Functions as a peptidyl-prolyl cis-trans isomerase. The protein is Trigger factor of Enterobacter sp. (strain 638).